The sequence spans 193 residues: ATP synthase subunit b 1 (193 aa).

The interval 9 to 28 is disordered; sequence QEADHTAGETHTETGVAEGG. Residues 10 to 20 are compositionally biased toward basic and acidic residues; that stretch reads EADHTAGETHT. The chain crosses the membrane as a helical span at residues 40–59; that stretch reads TYPSQLLWLAITFGLFYLFL.

The protein belongs to the ATPase B chain family. F-type ATPases have 2 components, F(1) - the catalytic core - and F(0) - the membrane proton channel. F(1) has five subunits: alpha(3), beta(3), gamma(1), delta(1), epsilon(1). F(0) has three main subunits: a(1), b(2) and c(10-14). The alpha and beta chains form an alternating ring which encloses part of the gamma chain. F(1) is attached to F(0) by a central stalk formed by the gamma and epsilon chains, while a peripheral stalk is formed by the delta and b chains.

It is found in the cell inner membrane. Functionally, f(1)F(0) ATP synthase produces ATP from ADP in the presence of a proton or sodium gradient. F-type ATPases consist of two structural domains, F(1) containing the extramembraneous catalytic core and F(0) containing the membrane proton channel, linked together by a central stalk and a peripheral stalk. During catalysis, ATP synthesis in the catalytic domain of F(1) is coupled via a rotary mechanism of the central stalk subunits to proton translocation. Its function is as follows. Component of the F(0) channel, it forms part of the peripheral stalk, linking F(1) to F(0). The sequence is that of ATP synthase subunit b 1 from Chelativorans sp. (strain BNC1).